Consider the following 171-residue polypeptide: Secreted thaumatin-like protein calA (171 aa).

An N-terminal signal peptide occupies residues 1 to 18 (MLFNKIISLAATLATASA). Residues Asn-37 and Asn-141 are each glycosylated (N-linked (GlcNAc...) asparagine). Intrachain disulfides connect Cys-130/Cys-157 and Cys-135/Cys-142.

It belongs to the thaumatin family.

The protein resides in the secreted. It localises to the extracellular space. The protein localises to the extracellular matrix. Its subcellular location is the cell wall. Functionally, secreted thaumatin-like protein that, with cetA, plays an essential role in early conidial germination with a possible role in cell wall remodeling. The sequence is that of Secreted thaumatin-like protein calA from Emericella nidulans (strain FGSC A4 / ATCC 38163 / CBS 112.46 / NRRL 194 / M139) (Aspergillus nidulans).